The sequence spans 69 residues: MADSEICGKRPVVGRRVTLSGERNRRIFKPNVHKMRVMLPDGTVKRMYVCTKCLKAGKVMKAPRIPKEG.

Belongs to the bacterial ribosomal protein bL28 family.

In Aquifex aeolicus (strain VF5), this protein is Large ribosomal subunit protein bL28.